We begin with the raw amino-acid sequence, 340 residues long: Tryptophan--tRNA ligase (340 aa).

ATP-binding positions include 11–13 (RPT) and 19–20 (GH). Residues 12–20 (PTGKLHLGH) carry the 'HIGH' region motif. Aspartate 140 contacts L-tryptophan. ATP is bound by residues 152 to 154 (GND), leucine 194, and 202 to 206 (KMSKS). The short motif at 202–206 (KMSKS) is the 'KMSKS' region element.

This sequence belongs to the class-I aminoacyl-tRNA synthetase family. As to quaternary structure, homodimer.

Its subcellular location is the cytoplasm. It catalyses the reaction tRNA(Trp) + L-tryptophan + ATP = L-tryptophyl-tRNA(Trp) + AMP + diphosphate + H(+). Functionally, catalyzes the attachment of tryptophan to tRNA(Trp). This chain is Tryptophan--tRNA ligase, found in Streptococcus pyogenes serotype M1.